Reading from the N-terminus, the 293-residue chain is Ribosomal protein L11 methyltransferase (293 aa).

S-adenosyl-L-methionine-binding residues include threonine 145, glycine 166, aspartate 188, and asparagine 230.

Belongs to the methyltransferase superfamily. PrmA family.

It is found in the cytoplasm. The catalysed reaction is L-lysyl-[protein] + 3 S-adenosyl-L-methionine = N(6),N(6),N(6)-trimethyl-L-lysyl-[protein] + 3 S-adenosyl-L-homocysteine + 3 H(+). Functionally, methylates ribosomal protein L11. This chain is Ribosomal protein L11 methyltransferase, found in Yersinia pseudotuberculosis serotype I (strain IP32953).